Consider the following 521-residue polypeptide: Probable cytosol aminopeptidase (521 aa).

Residues Lys-268 and Asp-273 each contribute to the Mn(2+) site. Lys-280 is an active-site residue. Positions 291, 350, and 352 each coordinate Mn(2+). Arg-354 is an active-site residue.

The protein belongs to the peptidase M17 family. The cofactor is Mn(2+).

The protein localises to the cytoplasm. It carries out the reaction Release of an N-terminal amino acid, Xaa-|-Yaa-, in which Xaa is preferably Leu, but may be other amino acids including Pro although not Arg or Lys, and Yaa may be Pro. Amino acid amides and methyl esters are also readily hydrolyzed, but rates on arylamides are exceedingly low.. It catalyses the reaction Release of an N-terminal amino acid, preferentially leucine, but not glutamic or aspartic acids.. Presumably involved in the processing and regular turnover of intracellular proteins. Catalyzes the removal of unsubstituted N-terminal amino acids from various peptides. The chain is Probable cytosol aminopeptidase from Chromobacterium violaceum (strain ATCC 12472 / DSM 30191 / JCM 1249 / CCUG 213 / NBRC 12614 / NCIMB 9131 / NCTC 9757 / MK).